The chain runs to 196 residues: Protein GrpE (196 aa).

The segment at 1–40 is disordered; sequence MSSKEQKTPEGQAPEEIIMDQHEEVEAVEPNDSAEQVDPR.

It belongs to the GrpE family. As to quaternary structure, homodimer.

The protein resides in the cytoplasm. Its function is as follows. Participates actively in the response to hyperosmotic and heat shock by preventing the aggregation of stress-denatured proteins, in association with DnaK and GrpE. It is the nucleotide exchange factor for DnaK and may function as a thermosensor. Unfolded proteins bind initially to DnaJ; upon interaction with the DnaJ-bound protein, DnaK hydrolyzes its bound ATP, resulting in the formation of a stable complex. GrpE releases ADP from DnaK; ATP binding to DnaK triggers the release of the substrate protein, thus completing the reaction cycle. Several rounds of ATP-dependent interactions between DnaJ, DnaK and GrpE are required for fully efficient folding. In Salmonella gallinarum (strain 287/91 / NCTC 13346), this protein is Protein GrpE.